The chain runs to 1572 residues: Multiple epidermal growth factor-like domains protein 6 (1572 aa).

The first 26 residues, 1–26 (MPVGVEARASWRVVALTLLLLPAVPA), serve as a signal peptide directing secretion. In terms of domain architecture, EMI spans 40-121 (MPHVCAEQKL…QKPGQEGCLS (82 aa)). Intrachain disulfides connect Cys-44/Cys-107, Cys-73/Cys-79, Cys-106/Cys-119, Cys-126/Cys-137, Cys-133/Cys-146, Cys-148/Cys-161, Cys-167/Cys-178, Cys-174/Cys-187, Cys-189/Cys-202, Cys-291/Cys-302, Cys-298/Cys-311, Cys-313/Cys-326, Cys-418/Cys-429, Cys-425/Cys-438, Cys-440/Cys-453, Cys-522/Cys-535, Cys-529/Cys-542, Cys-544/Cys-553, Cys-566/Cys-578, Cys-572/Cys-585, Cys-587/Cys-596, Cys-609/Cys-621, Cys-615/Cys-628, Cys-630/Cys-639, Cys-788/Cys-797, Cys-791/Cys-804, Cys-806/Cys-815, Cys-832/Cys-840, Cys-834/Cys-847, Cys-849/Cys-858, Cys-871/Cys-884, Cys-875/Cys-891, Cys-893/Cys-902, Cys-915/Cys-927, Cys-921/Cys-934, and Cys-936/Cys-945. Residues 122-162 (DVDECANANGGCEGPCCNTVGGFYCRCPPGYQLQGDGKTCQ) form the EGF-like 1; calcium-binding domain. One can recognise an EGF-like 2; calcium-binding domain in the interval 163 to 203 (DVDECRSHNGGCQHRCVNTPGSYLCECKPGFRLHTDGRTCL). In terms of domain architecture, EGF-like 3; calcium-binding spans 287 to 327 (DVDECALGLAQCAHGCLNTQGSFKCVCHAGYELGADGRQCY). The region spanning 414-454 (DVDECASGHSGCEHHCSNLAGSFQCFCEAGYRLDEDRRGCT) is the EGF-like 4; calcium-binding domain. EGF-like domains follow at residues 518 to 554 (FGHD…IICN), 562 to 597 (FGKN…AHCE), 605 to 640 (YGKH…RFCH), 785 to 816 (QEIC…SRCQ), 829 to 859 (QMRC…LSCQ), 867 to 903 (WGPD…PQCE), 911 to 946 (FGPG…SFCE), 997 to 1032 (FGLN…PTCL), 1040 to 1075 (YGKN…LACE), 1083 to 1118 (HGAG…DKCQ), 1131 to 1161 (EEHC…SHCE), 1169 to 1204 (FGEA…PGCE), 1256 to 1291 (YGPG…ADCS), 1299 to 1334 (FGPS…GHCE), 1342 to 1377 (FGKG…PHCE), 1390 to 1420 (LLEC…QACE), and 1428 to 1463 (HGSG…QFCE). Asn-1000 carries N-linked (GlcNAc...) asparagine glycosylation. Disulfide bonds link Cys-1001–Cys-1013, Cys-1007–Cys-1020, Cys-1022–Cys-1031, Cys-1044–Cys-1056, Cys-1050–Cys-1063, Cys-1065–Cys-1074, Cys-1087–Cys-1099, Cys-1093–Cys-1106, Cys-1108–Cys-1117, Cys-1134–Cys-1142, Cys-1136–Cys-1149, Cys-1151–Cys-1160, Cys-1173–Cys-1185, Cys-1177–Cys-1192, Cys-1194–Cys-1203, Cys-1260–Cys-1272, Cys-1266–Cys-1279, Cys-1281–Cys-1290, Cys-1303–Cys-1315, Cys-1309–Cys-1322, Cys-1324–Cys-1333, Cys-1346–Cys-1358, Cys-1352–Cys-1365, Cys-1367–Cys-1376, Cys-1393–Cys-1401, Cys-1395–Cys-1408, Cys-1410–Cys-1419, Cys-1432–Cys-1444, Cys-1438–Cys-1451, and Cys-1453–Cys-1462.

It localises to the secreted. The sequence is that of Multiple epidermal growth factor-like domains protein 6 (Megf6) from Mus musculus (Mouse).